A 527-amino-acid chain; its full sequence is MSHQPLSCLTEKEDSPTESTGNGPPYLAHPNLDTFTPEELLQQMKELLTENHQLKEAMKLNNQAMKGRFEELSAWTEKQKEERQFFEIQSKEAKERLMALSHENEKLKEELGKLKGKSERSSEDPTDDSRLPRAEAEQEKDQLRTQVVRLQAEKADLLGIVSELQLKLNSSGSSEDSFVEIRMAEGEAEGSVKEIKHSPGPTRTVSTSRALSKYRSRSAEGAKNYLEHEELTVSQLLLCLREGNQKVERLEIALKEAKERVSDFEKKASNRSEIETQTEGSTEKENDEEKGLETVGSEVEALNLQVTSLFKELQEAHTKLSEAELMKKRLQEKSKLTVLQMTHNKLLREHNNALKTIEELTRKESEKVDRAVLKELSEKLELAEQALASKQLQMDEMKQTIAKQEEDLETMTVLRAQMEVYCSDFHAERAAREKIHEQKEQLALQLAVLLKENDAFEDGGRQSLMEMQSRHGARTSGADQQAYLVQRGAEDRDWRQQRNIPIHSCPKCGEVLPDIDTLQIHVMDCII.

Disordered stretches follow at residues 1–32 (MSHQ…HPNL) and 101–143 (SHEN…KDQL). Positions 38 to 170 (EELLQQMKEL…VSELQLKLNS (133 aa)) form a coiled coil. The segment at 58 to 209 (MKLNNQAMKG…GPTRTVSTSR (152 aa)) is interaction with Rab8. The LIR motif lies at 176-181 (DSFVEI). Phosphoserine; by TBK1 is present on Ser177. The span at 186 to 197 (GEAEGSVKEIKH) shows a compositional bias: basic and acidic residues. Disordered regions lie at residues 186-214 (GEAE…LSKY) and 262-292 (SDFE…EKGL). At Ser198 the chain carries Phosphoserine. The segment covering 201-210 (PTRTVSTSRA) has biased composition (polar residues). The stretch at 239-458 (CLREGNQKVE…LLKENDAFED (220 aa)) forms a coiled coil. Composition is skewed to basic and acidic residues over residues 262–274 (SDFE…RSEI) and 281–292 (STEKENDEEKGL). Residues 361–527 (TRKESEKVDR…LQIHVMDCII (167 aa)) form an interaction with HD region. The interval 362 to 470 (RKESEKVDRA…RQSLMEMQSR (109 aa)) is interaction with MYO6. The short motif at 424–429 (DFHAER) is the UBAN element. At Ser476 the chain carries Phosphoserine. The CCHC NOA-type zinc finger occupies 497-527 (QRNIPIHSCPKCGEVLPDIDTLQIHVMDCII). Residues Cys505, Cys508, His521, and Cys525 each contribute to the Zn(2+) site.

As to quaternary structure, self-associates. Interacts with HD. Interacts with GTF3A. Interacts with MYO6. Interacts (via UBAN) with ubiquitinated TFRC. Interacts with GTP-bound Rab8 (RAB8A and/or RAB8B). Interacts with TBC1D17. Interacts with TBK1. Interacts with TRAF3. Binds to linear ubiquitin chains. Interacts with LC3 family members MAP1LC3A, MAP1LC3B, GABARAP, GABARAPL1 and GABARAPL2; OPTN phosphorylation increases the association (at least with MAP1LC3B). Interacts with RAB12; the interaction may be indirect. Interacts with TBK1; this interaction leads to the Golgi localization of TBK1 and its subsequent activation. Interacts with palmitoyltransferase ZDHHC17/HIP14; the interaction does not lead to palmitoylation of OPTN. Interacts with CYLD. Interacts with TOM1; the interaction is indirect and is mediated by MYO6, which acts as a bridge between TOM1 and OPTN. Interacts with USP12; the interaction is independent of USP12 deubiquitinase activity and may be involved in regulation of autophagic flux. Post-translationally, phosphorylated by TBK1, leading to restrict bacterial proliferation in case of infection.

It localises to the cytoplasm. The protein localises to the perinuclear region. Its subcellular location is the golgi apparatus. It is found in the trans-Golgi network. The protein resides in the cytoplasmic vesicle. It localises to the autophagosome. The protein localises to the recycling endosome. Functionally, plays an important role in the maintenance of the Golgi complex, in membrane trafficking, in exocytosis, through its interaction with myosin VI and Rab8. Links myosin VI to the Golgi complex and plays an important role in Golgi ribbon formation. Negatively regulates the induction of IFNB in response to RNA virus infection. Plays a neuroprotective role in the eye and optic nerve. Probably part of the TNF-alpha signaling pathway that can shift the equilibrium toward induction of cell death. May act by regulating membrane trafficking and cellular morphogenesis via a complex that contains Rab8 and huntingtin (HD). Mediates the interaction of Rab8 with the probable GTPase-activating protein TBC1D17 during Rab8-mediated endocytic trafficking, such as that of transferrin receptor (TFRC/TfR); regulates Rab8 recruitment to tubules emanating from the endocytic recycling compartment. Autophagy receptor that interacts directly with both the cargo to become degraded and an autophagy modifier of the MAP1 LC3 family; targets ubiquitin-coated bacteria (xenophagy) and appears to function in the same pathway as SQSTM1 and CALCOCO2/NDP52. In Pongo abelii (Sumatran orangutan), this protein is Optineurin (OPTN).